Here is a 250-residue protein sequence, read N- to C-terminus: GTP cyclohydrolase 1 type 2 homolog (250 aa).

A divalent metal cation contacts are provided by His63, His64, Asp100, His218, and Glu222.

The protein belongs to the GTP cyclohydrolase I type 2/NIF3 family. Homohexamer.

The sequence is that of GTP cyclohydrolase 1 type 2 homolog from Pyrococcus abyssi (strain GE5 / Orsay).